Here is a 205-residue protein sequence, read N- to C-terminus: High frequency lysogenization protein HflD homolog (205 aa).

It belongs to the HflD family.

The protein localises to the cytoplasm. Its subcellular location is the cell inner membrane. The polypeptide is High frequency lysogenization protein HflD homolog (Shewanella sp. (strain ANA-3)).